Consider the following 364-residue polypeptide: Aminomethyltransferase (364 aa).

It belongs to the GcvT family. In terms of assembly, the glycine cleavage system is composed of four proteins: P, T, L and H.

The enzyme catalyses N(6)-[(R)-S(8)-aminomethyldihydrolipoyl]-L-lysyl-[protein] + (6S)-5,6,7,8-tetrahydrofolate = N(6)-[(R)-dihydrolipoyl]-L-lysyl-[protein] + (6R)-5,10-methylene-5,6,7,8-tetrahydrofolate + NH4(+). The glycine cleavage system catalyzes the degradation of glycine. This Shigella flexneri serotype 5b (strain 8401) protein is Aminomethyltransferase.